An 808-amino-acid polypeptide reads, in one-letter code: Probable inorganic carbon transporter subunit DabA (808 aa).

Residues Cys-334, Asp-336, His-494, and Cys-509 each contribute to the Zn(2+) site.

This sequence belongs to the inorganic carbon transporter (TC 9.A.2) DabA family. In terms of assembly, forms a complex with DabB. Zn(2+) serves as cofactor.

The protein resides in the cell inner membrane. Part of an energy-coupled inorganic carbon pump. The chain is Probable inorganic carbon transporter subunit DabA from Rhodopseudomonas palustris (strain BisB5).